A 285-amino-acid polypeptide reads, in one-letter code: RING finger protein 223 (285 aa).

The RING-type zinc-finger motif lies at 81-132 (CSICFSGYDNIFKTPKELSCSHVFCLECLARLAAAQPAGRSGREAVPCPFCR). The helical transmembrane segment at 230–250 (VALVSVLLLVLFCVILWPVQC) threads the bilayer.

It localises to the membrane. This chain is RING finger protein 223 (Rnf223), found in Mus musculus (Mouse).